The primary structure comprises 544 residues: Chaperonin GroEL (544 aa).

ATP contacts are provided by residues 29–32, lysine 50, 86–90, glycine 413, 479–481, and aspartate 495; these read TLGP, DGTTT, and DAA.

Belongs to the chaperonin (HSP60) family. In terms of assembly, forms a cylinder of 14 subunits composed of two heptameric rings stacked back-to-back. Interacts with the co-chaperonin GroES.

The protein resides in the cytoplasm. It carries out the reaction ATP + H2O + a folded polypeptide = ADP + phosphate + an unfolded polypeptide.. Its function is as follows. Together with its co-chaperonin GroES, plays an essential role in assisting protein folding. The GroEL-GroES system forms a nano-cage that allows encapsulation of the non-native substrate proteins and provides a physical environment optimized to promote and accelerate protein folding. In Borrelia duttonii (strain Ly), this protein is Chaperonin GroEL.